We begin with the raw amino-acid sequence, 2333 residues long: Genome polyprotein (2333 aa).

The 201-residue stretch at M1–K201 folds into the Peptidase C28 domain. The Cytoplasmic segment spans residues M1–L1481. Residues C51, H148, and D163 each act as for leader protease activity in the active site. Disordered regions lie at residues Q197–N218 and Q238–N265. G202 is lipidated: N-myristoyl glycine; by host. Polar residues-rich tracts occupy residues G204–N218 and Q238–G251. Residues S252 to N265 are compositionally biased toward low complexity. The segment at A789–Y797 is antigenic epitope. The Cell attachment site motif lies at R869–D871. The SF3 helicase domain maps to N1190–D1354. G1218–S1225 contributes to the ATP binding site. Residues K1482–I1502 lie within the membrane without spanning it. Over R1503–A2333 the chain is Cytoplasmic. Composition is skewed to basic and acidic residues over residues K1530–P1539 and F1550–E1564. A disordered region spans residues K1530–P1585. The span at E1567 to E1579 shows a compositional bias: low complexity. O-(5'-phospho-RNA)-tyrosine occurs at positions 1582, 1605, and 1629. A Peptidase C3 domain is found at A1653 to L1849. H1696 (for protease 3C activity; Proton donor/acceptor) is an active-site residue. Active-site for protease 3C activity residues include D1734 and C1813. Residues M1879–T1887 carry the Nuclear localization signal motif. In terms of domain architecture, RdRp catalytic spans R2097–A2215. Residue D2201 is the For RdRp activity of the active site.

Belongs to the picornaviruses polyprotein family. As to quaternary structure, interacts with host ISG15. In terms of assembly, interacts (via R-G-D motif) with host ITGAV/ITGB6. Interacts with host MAVS; this interaction inhibits binding of host TRAF3 to MAVS, thereby suppressing interferon-mediated responses. Forms homooligomers. As to quaternary structure, homohexamer. Interacts with host VIM. Interacts with host BECN1. In terms of assembly, interacts with host DCTN3. Interacts with RNA-dependent RNA polymerase; this interaction allows 3B-1 to binds 2 polymerases and act as a primer. It also allows the recruitment of the RNA-dependent RNA polymerase to host membranes. As to quaternary structure, interacts with RNA-dependent RNA polymerase; this interaction allows 3B-2 to act as a primer. In terms of assembly, interacts with RNA-dependent RNA polymerase; this interaction allows 3B-3 to act as a primer. Interacts with 3B-1; this interaction allows 3B-1 to binds 2 polymerases and act as a primer. It also allows the recruitment of the RNA-dependent RNA polymerase to host membranes. Interacts with 3B-2; this interaction allows 3B-2 to act as a primer. Interacts with 3B-3; this interaction allows 3B-3 to act as a primer. Post-translationally, removes six residues from its own C-terminus, generating sLb(pro). In terms of processing, specific enzymatic cleavages in vivo by the viral proteases yield a variety of precursors and mature proteins. The polyprotein seems to be cotranslationally cleaved at the 2A/2B junction by a ribosomal skip from one codon to the next without formation of a peptide bond. This process would release the L-P1-2A peptide from the translational complex. During virion maturation, immature virions are rendered infectious following cleavage of VP0 into VP4 and VP2. This maturation seems to be an autocatalytic event triggered by the presence of RNA in the capsid and is followed by a conformational change of the particle. Post-translationally, myristoylation is required during RNA encapsidation and formation of the mature virus particle. In terms of processing, uridylylated by the polymerase and covalently linked to the 5'-end of genomic RNA. These uridylylated forms act as a nucleotide-peptide primer for the polymerase.

It is found in the host nucleus. The protein resides in the host cytoplasm. It localises to the virion. The protein localises to the host endoplasmic reticulum membrane. Its subcellular location is the host cytoplasmic vesicle membrane. It carries out the reaction Autocatalytically cleaves itself from the polyprotein of the foot-and-mouth disease virus by hydrolysis of a Lys-|-Gly bond, but then cleaves host cell initiation factor eIF-4G at bonds -Gly-|-Arg- and -Lys-|-Arg-.. It catalyses the reaction a ribonucleoside 5'-triphosphate + H2O = a ribonucleoside 5'-diphosphate + phosphate + H(+). The enzyme catalyses RNA(n) + a ribonucleoside 5'-triphosphate = RNA(n+1) + diphosphate. The catalysed reaction is Selective cleavage of Gln-|-Gly bond in the poliovirus polyprotein. In other picornavirus reactions Glu may be substituted for Gln, and Ser or Thr for Gly.. Autocatalytically cleaves itself from the polyprotein at the L/VP0 junction. Also cleaves the host translation initiation factors EIF4G1 and EIF4G3, in order to shut off the capped cellular mRNA transcription. Plays a role in counteracting host innate antiviral response using diverse mechanisms. Possesses a deubiquitinase activity acting on both 'Lys-48' and 'Lys-63'-linked polyubiquitin chains. In turn, inhibits the ubiquitination and subsequent activation of key signaling molecules of type I IFN response such as host RIGI, TBK1, TRAF3 and TRAF6. Inhibits host NF-kappa-B activity by inducing a decrease in RELA mRNA levels. Cleaves a peptide bond in the C-terminus of host ISG15, resulting in the damaging of this modifier that can no longer be attached to target proteins. Also cleaves host G3BP1 and G3BP2 in order to inhibit cytoplasmic stress granules assembly. In terms of biological role, lies on the inner surface of the capsid shell. After binding to the host receptor, the capsid undergoes conformational changes. Capsid protein VP4 is released, capsid protein VP1 N-terminus is externalized, and together, they shape a pore in the host membrane through which the viral genome is translocated into the host cell cytoplasm. After genome has been released, the channel shrinks. Its function is as follows. Forms an icosahedral capsid of pseudo T=3 symmetry with capsid proteins VP1 and VP3. The capsid is composed of 60 copies of each capsid protein organized in the form of twelve pentamers and encloses the viral positive strand RNA genome. Upon acidifcation in the endosome, dissociates into pentamers. Functionally, forms an icosahedral capsid of pseudo T=3 symmetry with capsid proteins VP0 and VP3. The capsid is composed of 60 copies of each capsid protein organized in the form of twelve pentamers and encloses the viral positive strand RNA genome. Upon acidifcation in the endosome, dissociates into pentamers. Forms an icosahedral capsid of pseudo T=3 symmetry with capsid proteins VP2 and VP3. The capsid is composed of 60 copies of each capsid protein organized in the form of twelve pentamers and encloses the viral positive strand RNA genome. Mediates cell entry by attachment to an integrin receptor, usually host ITGAV/ITGB6. In addition, targets host MAVS to suppress type I IFN pathway. Upon acidifcation in the endosome, dissociates into pentamers. In terms of biological role, mediates self-processing of the polyprotein by a translational effect termed 'ribosome skipping'. Mechanistically, 2A-mediated cleavage occurs between the C-terminal glycine and the proline of the downstream protein 2B. In the case of foot-and-mouth disease virus, the 2A oligopeptide is post-translationally 'trimmed' from the C-terminus of the upstream protein 1D by 3C proteinase. Its function is as follows. Plays an essential role in the virus replication cycle by acting as a viroporin. Creates a pore in the host endoplasmic reticulum and as a consequence releases Ca2+ in the cytoplasm of infected cell. In turn, high levels of cytoplasmic calcium may trigger membrane trafficking and transport of viral ER-associated proteins to viroplasms, sites of viral genome replication. Functionally, associates with and induces structural rearrangements of intracellular membranes. Triggers host autophagy by interacting with host BECN1 and thereby promotes viral replication. Participates in viral replication and interacts with host DHX9. Displays RNA-binding, nucleotide binding and NTPase activities. May play a role in virion morphogenesis and viral RNA encapsidation by interacting with the capsid protein VP3. Plays important roles in virus replication, virulence and host range. Cooperates with host DDX56 to inhibit IRF3 nuclear translocation and subsequent type I interferon production. In terms of biological role, covalently linked to the 5'-end of both the positive-strand and negative-strand genomic RNAs. Acts as a genome-linked replication primer. Its function is as follows. Cysteine protease that generates mature viral proteins from the precursor polyprotein. In addition to its proteolytic activity, binds to viral RNA and thus influences viral genome replication. RNA and substrate bind cooperatively to the protease. Functionally, RNA-directed RNA polymerase 3D-POL replicates genomic and antigenomic RNA by recognizing replications specific signals. Covalently attaches UMP to a tyrosine of VPg, which is used to prime RNA synthesis. The positive stranded RNA genome is first replicated at virus induced membranous vesicles, creating a dsRNA genomic replication form. This dsRNA is then used as template to synthesize positive stranded RNA genomes. ss(+)RNA genomes are either translated, replicated or encapsidated. This is Genome polyprotein from Bos taurus (Bovine).